Here is a 311-residue protein sequence, read N- to C-terminus: tRNA dimethylallyltransferase (311 aa).

10–17 (GPTASGKT) serves as a coordination point for ATP. Residue 12 to 17 (TASGKT) coordinates substrate. 3 interaction with substrate tRNA regions span residues 35–38 (DSAL), 159–163 (QRINR), and 240–245 (RCVGYR).

Belongs to the IPP transferase family. In terms of assembly, monomer. The cofactor is Mg(2+).

The catalysed reaction is adenosine(37) in tRNA + dimethylallyl diphosphate = N(6)-dimethylallyladenosine(37) in tRNA + diphosphate. In terms of biological role, catalyzes the transfer of a dimethylallyl group onto the adenine at position 37 in tRNAs that read codons beginning with uridine, leading to the formation of N6-(dimethylallyl)adenosine (i(6)A). This Haemophilus influenzae (strain PittEE) protein is tRNA dimethylallyltransferase.